The sequence spans 728 residues: MAKWREMGLTDEEYRRIVEYLGREPNEVELGMCAVMWSEHCSYKSSKIHLKKLPTRGPAVVQGPGENAGVVDIGDGLGIAFKIESHNHPSAIEPYQGAATGVGGIIRDIFAMGARPIALLDSLRFGKLHSPRVRHLFTGVVAGIAGYGNCIGIPTVAGDVYFQESYEENPLVNAMCVGIVELSKLKKGVATGVGNPVLLVGATTGRDGIHGATFASEELSQDGEDKRPSVQVGDPFMEKLLLEACLEALEYGHIVGMQDLGAAGLTSSSSEMAARGKSGIRLYLDRVPLREEGMTPYEIMLSESQERMLLVVEKGYEDEIIKIFKKWDLNAVVVGEITDGEEIEVFFDGECVAKLPYRLLTEEAPVYDRPYRIPEIKNLQSINPAGVDCGEALRRLLQSPNIARKSYVYEQYDHQVGVNTVVKPGYSDAAVLRIKGTKKGIAVKTDGNGRYVYHNPREGAKRAVLETALNLAVTGAKPLGLTNCLNFGNPEKPEIMGQFVEVIAGMKEACEILNIPVTGGNVSFYNETGEKAIYPTPVIGMVGLIDDLETGLIPMAFQTEGDLIYLLGEPTGELGQSEFLKEFFGDVLVPVPPVDLQEGRRIIELLPLLKKQGLINSAHDVSDGGLAVSLCEAAFAGELGVNIDFTTSLLPQEFLFSEKVGLVIVSVSPEKEEEFIKSVKNAGVFVLKLGRVNGKDEIEICLNGQRVIQEKLSELKALYEGGLSWALK.

Residue histidine 40 is part of the active site. Residues tyrosine 43 and lysine 82 each contribute to the ATP site. Glutamate 84 provides a ligand contact to Mg(2+). Residues serine 85–histidine 88 and arginine 107 contribute to the substrate site. The active-site Proton acceptor is histidine 86. Mg(2+) is bound at residue aspartate 108. Residue glutamine 231 participates in substrate binding. Aspartate 259 serves as a coordination point for Mg(2+). Glutamate 303–glutamine 305 contributes to the substrate binding site. ATP contacts are provided by asparagine 483 and glycine 520. Residue asparagine 521 coordinates Mg(2+). Serine 523 provides a ligand contact to substrate.

Belongs to the FGAMS family. Monomer. Part of the FGAM synthase complex composed of 1 PurL, 1 PurQ and 2 PurS subunits.

The protein localises to the cytoplasm. It carries out the reaction N(2)-formyl-N(1)-(5-phospho-beta-D-ribosyl)glycinamide + L-glutamine + ATP + H2O = 2-formamido-N(1)-(5-O-phospho-beta-D-ribosyl)acetamidine + L-glutamate + ADP + phosphate + H(+). Its pathway is purine metabolism; IMP biosynthesis via de novo pathway; 5-amino-1-(5-phospho-D-ribosyl)imidazole from N(2)-formyl-N(1)-(5-phospho-D-ribosyl)glycinamide: step 1/2. Functionally, part of the phosphoribosylformylglycinamidine synthase complex involved in the purines biosynthetic pathway. Catalyzes the ATP-dependent conversion of formylglycinamide ribonucleotide (FGAR) and glutamine to yield formylglycinamidine ribonucleotide (FGAM) and glutamate. The FGAM synthase complex is composed of three subunits. PurQ produces an ammonia molecule by converting glutamine to glutamate. PurL transfers the ammonia molecule to FGAR to form FGAM in an ATP-dependent manner. PurS interacts with PurQ and PurL and is thought to assist in the transfer of the ammonia molecule from PurQ to PurL. This chain is Phosphoribosylformylglycinamidine synthase subunit PurL, found in Carboxydothermus hydrogenoformans (strain ATCC BAA-161 / DSM 6008 / Z-2901).